The primary structure comprises 344 residues: S-adenosylmethionine:tRNA ribosyltransferase-isomerase (344 aa).

It belongs to the QueA family. In terms of assembly, monomer.

Its subcellular location is the cytoplasm. It carries out the reaction 7-aminomethyl-7-carbaguanosine(34) in tRNA + S-adenosyl-L-methionine = epoxyqueuosine(34) in tRNA + adenine + L-methionine + 2 H(+). Its pathway is tRNA modification; tRNA-queuosine biosynthesis. In terms of biological role, transfers and isomerizes the ribose moiety from AdoMet to the 7-aminomethyl group of 7-deazaguanine (preQ1-tRNA) to give epoxyqueuosine (oQ-tRNA). This is S-adenosylmethionine:tRNA ribosyltransferase-isomerase from Levilactobacillus brevis (strain ATCC 367 / BCRC 12310 / CIP 105137 / JCM 1170 / LMG 11437 / NCIMB 947 / NCTC 947) (Lactobacillus brevis).